Here is a 939-residue protein sequence, read N- to C-terminus: UvrABC system protein A (939 aa).

32-39 (GLSGSGKS) contacts ATP. The C4-type zinc finger occupies 252–279 (CADCGISIDELAPRMFSFNSPFGKCERC). 2 ABC transporter domains span residues 309–588 (WGDS…ENSL) and 608–936 (GNGN…KYLK). Residue 640–647 (GVSGSGKS) participates in ATP binding. A C4-type zinc finger spans residues 739 to 765 (CEACSGDGIIKIEMQFLSDVYVPCEVC).

It belongs to the ABC transporter superfamily. UvrA family. As to quaternary structure, forms a heterotetramer with UvrB during the search for lesions.

Its subcellular location is the cytoplasm. The UvrABC repair system catalyzes the recognition and processing of DNA lesions. UvrA is an ATPase and a DNA-binding protein. A damage recognition complex composed of 2 UvrA and 2 UvrB subunits scans DNA for abnormalities. When the presence of a lesion has been verified by UvrB, the UvrA molecules dissociate. The polypeptide is UvrABC system protein A (Clostridium perfringens (strain 13 / Type A)).